A 386-amino-acid chain; its full sequence is Putrescine N-methyltransferase 4 (386 aa).

Composition is skewed to polar residues over residues 1–14, 23–48, and 57–87; these read MEVISTNTNGSTIF, GHQSGTSKHLNGYQNGTSKHQNGHHN, and HQNGISEHQNGHQNGTSEQQNGTISHDNGNE. The segment at 1–87 is disordered; sequence MEVISTNTNG…GTISHDNGNE (87 aa). The PABS domain occupies 97–334; the sequence is LGWFSEFSAL…GVIGYMLCST (238 aa). S-adenosyl-L-methionine-binding positions include glutamine 128, glutamate 203, and 234–235; that span reads DG. Aspartate 253 serves as the catalytic Proton acceptor. Residue tyrosine 322 participates in S-adenosyl-L-methionine binding.

This sequence belongs to the class I-like SAM-binding methyltransferase superfamily. Putrescine methyltransferase family. In terms of tissue distribution, predominantly expressed in roots.

The enzyme catalyses putrescine + S-adenosyl-L-methionine = N-methylputrescine + S-adenosyl-L-homocysteine + H(+). Its pathway is alkaloid biosynthesis; nicotine biosynthesis. Its function is as follows. Involved in the biosynthesis of pyridine alkaloid natural products, leading mainly to the production of anabasine, anatabine, nicotine and nornicotine, effective deterrents against herbivores with antiparasitic and pesticide properties (neurotoxins); nornicotine serves as the precursor in the synthesis of the carcinogen compound N'-nitrosonornicotine (NNN). Methyltransferase that mediates the conversion of putrescine to N-methylputrescine. Promotes leaves ripening. This Nicotiana tabacum (Common tobacco) protein is Putrescine N-methyltransferase 4.